The sequence spans 188 residues: Elongation factor P (188 aa).

This sequence belongs to the elongation factor P family.

The protein resides in the cytoplasm. It participates in protein biosynthesis; polypeptide chain elongation. In terms of biological role, involved in peptide bond synthesis. Stimulates efficient translation and peptide-bond synthesis on native or reconstituted 70S ribosomes in vitro. Probably functions indirectly by altering the affinity of the ribosome for aminoacyl-tRNA, thus increasing their reactivity as acceptors for peptidyl transferase. The sequence is that of Elongation factor P from Phocaeicola vulgatus (strain ATCC 8482 / DSM 1447 / JCM 5826 / CCUG 4940 / NBRC 14291 / NCTC 11154) (Bacteroides vulgatus).